The chain runs to 182 residues: ATP synthase subunit b, chloroplastic (182 aa).

The helical transmembrane segment at 36 to 56 (ILLLLLGLMYVLKEFLGSILV) threads the bilayer.

It belongs to the ATPase B chain family. In terms of assembly, F-type ATPases have 2 components, F(1) - the catalytic core - and F(0) - the membrane proton channel. F(1) has five subunits: alpha(3), beta(3), gamma(1), delta(1), epsilon(1). F(0) has four main subunits: a(1), b(1), b'(1) and c(10-14). The alpha and beta chains form an alternating ring which encloses part of the gamma chain. F(1) is attached to F(0) by a central stalk formed by the gamma and epsilon chains, while a peripheral stalk is formed by the delta, b and b' chains.

It localises to the plastid. The protein resides in the chloroplast thylakoid membrane. F(1)F(0) ATP synthase produces ATP from ADP in the presence of a proton or sodium gradient. F-type ATPases consist of two structural domains, F(1) containing the extramembraneous catalytic core and F(0) containing the membrane proton channel, linked together by a central stalk and a peripheral stalk. During catalysis, ATP synthesis in the catalytic domain of F(1) is coupled via a rotary mechanism of the central stalk subunits to proton translocation. In terms of biological role, component of the F(0) channel, it forms part of the peripheral stalk, linking F(1) to F(0). The sequence is that of ATP synthase subunit b, chloroplastic from Gracilaria tenuistipitata var. liui (Red alga).